The sequence spans 350 residues: C5a anaphylatoxin chemotactic receptor 1 (350 aa).

Over M1–D37 the chain is Extracellular. N-linked (GlcNAc...) asparagine glycosylation is present at N5. Residues D10–D18 are required for CHIPS binding. 2 positions are modified to sulfotyrosine: Y11 and Y14. Residues D21–S30 are involved in C5a binding. Residues I38–F64 traverse the membrane as a helical segment. Over E65–T69 the chain is Cytoplasmic. A helical transmembrane segment spans residues I70–F93. Residues T94–S110 lie on the Extracellular side of the membrane. C109 and C188 are joined by a disulfide. A helical transmembrane segment spans residues I111–A132. At D133–A153 the chain is on the cytoplasmic side. The chain crosses the membrane as a helical span at residues W154 to Y174. Topologically, residues R175–R200 are extracellular. The helical transmembrane segment at A201–L226 threads the bilayer. The Cytoplasmic portion of the chain corresponds to L227–K242. Residues V243–M265 traverse the membrane as a helical segment. The Extracellular portion of the chain corresponds to S266–D282. Residues S283 to A303 traverse the membrane as a helical segment. Residues G304–V350 lie on the Cytoplasmic side of the membrane. 6 positions are modified to phosphoserine: S314, S317, S327, S332, S334, and S338.

It belongs to the G-protein coupled receptor 1 family. Homodimer. May also form higher-order oligomers. Interacts (when phosphorylated) with ARRB1 and ARRB2; the interaction is associated with internalization of C5aR. Interacts (via N-terminal domain) with S.aureus chemotaxis inhibitory protein (CHIPS); the interaction blocks the receptor and may thus inhibit the immune response. In terms of processing, sulfation plays a critical role in the association of C5aR with C5a, but no significant role in the ability of the receptor to transduce a signal and mobilize calcium in response to a small a small peptide agonist. Sulfation at Tyr-14 is important for CHIPS binding. Phosphorylated on serine residues in response to C5a binding, resulting in internalization of the receptor and short-term desensitization to the ligand. The key residues involved in this process are Ser-334 and Ser-338.

The protein localises to the cell membrane. Its subcellular location is the cytoplasmic vesicle. Its function is as follows. Receptor for the chemotactic and inflammatory peptide anaphylatoxin C5a. The ligand interacts with at least two sites on the receptor: a high-affinity site on the extracellular N-terminus, and a second site in the transmembrane region which activates downstream signaling events. Receptor activation stimulates chemotaxis, granule enzyme release, intracellular calcium release and superoxide anion production. This chain is C5a anaphylatoxin chemotactic receptor 1 (C5AR1), found in Homo sapiens (Human).